A 321-amino-acid polypeptide reads, in one-letter code: Probable GDP-L-fucose synthase (321 aa).

8–14 provides a ligand contact to NADP(+); it reads GGTGLVG. The Proton donor/acceptor role is filled by Tyr136. Residues Lys140, 163–166, and His179 contribute to the NADP(+) site; that span reads PCNI. The substrate site is built by Arg187, Arg215, and Asp277.

It belongs to the NAD(P)-dependent epimerase/dehydratase family. Fucose synthase subfamily. As to quaternary structure, homodimer.

It catalyses the reaction GDP-beta-L-fucose + NADP(+) = GDP-4-dehydro-alpha-D-rhamnose + NADPH + H(+). It participates in nucleotide-sugar biosynthesis; GDP-L-fucose biosynthesis via de novo pathway; GDP-L-fucose from GDP-alpha-D-mannose: step 2/2. Catalyzes the two-step NADP-dependent conversion of GDP-4-dehydro-6-deoxy-D-mannose to GDP-fucose, involving an epimerase and a reductase reaction. This is Probable GDP-L-fucose synthase (Gmer) from Drosophila melanogaster (Fruit fly).